Consider the following 100-residue polypeptide: Carboxysome shell vertex protein CcmL (100 aa).

One can recognise a BMV domain in the interval 1–83 (MQLAKVLGTV…LDAMVVGIID (83 aa)).

It belongs to the CcmL/EutN family. CcmL subfamily. In terms of assembly, homopentamer. Interacts with full-length CcmM.

The protein resides in the carboxysome. In terms of biological role, probably forms vertices in the carboxysome, a polyhedral inclusion where RuBisCO (ribulose bisphosphate carboxylase, rbcL-rbcS) is sequestered. Has been modeled to induce curvature upon insertion into an otherwise flat hexagonal molecular layer of CcmK subunits. In Synechocystis sp. (strain ATCC 27184 / PCC 6803 / Kazusa), this protein is Carboxysome shell vertex protein CcmL.